Reading from the N-terminus, the 545-residue chain is Membrane protein insertase YidC (545 aa).

A helical transmembrane segment spans residues 6 to 26 (NILLIGLLFVSFLLWQQWQAD). The interval 44–65 (STVADAHSSDVPDADSAVPEAT) is disordered. 4 helical membrane passes run 346–366 (LLMFFQSIVGNWGIAIILITL), 424–444 (GGCLPILLQMPIFIALYWVLL), 461–481 (LSVQDPYYVMPILMGISMFVM), and 504–524 (VIFTVFFLWFPAGLVLYWLVG).

Belongs to the OXA1/ALB3/YidC family. Type 1 subfamily. As to quaternary structure, interacts with the Sec translocase complex via SecD. Specifically interacts with transmembrane segments of nascent integral membrane proteins during membrane integration.

It localises to the cell inner membrane. Its function is as follows. Required for the insertion and/or proper folding and/or complex formation of integral membrane proteins into the membrane. Involved in integration of membrane proteins that insert both dependently and independently of the Sec translocase complex, as well as at least some lipoproteins. Aids folding of multispanning membrane proteins. The protein is Membrane protein insertase YidC of Shewanella pealeana (strain ATCC 700345 / ANG-SQ1).